The primary structure comprises 378 residues: 1-acyl-sn-glycerol-3-phosphate acyltransferase delta (378 aa).

Residues 11-31 (FLCHLVFCYVFIASGLIVNAI) traverse the membrane as a helical segment. An HXXXXD motif motif is present at residues 96–101 (HKFEID). The next 3 helical transmembrane spans lie at 125-145 (ELAY…IFCT), 311-331 (WLFW…SMVS), and 338-358 (LASL…MIGV).

This sequence belongs to the 1-acyl-sn-glycerol-3-phosphate acyltransferase family. As to expression, expressed at a high levels in the brain, at intermediate or low levels in skeletal muscles, gut, kidney, spleen and lung. Barely detectable in heart and liver.

It is found in the endoplasmic reticulum membrane. The catalysed reaction is a 1-acyl-sn-glycero-3-phosphate + an acyl-CoA = a 1,2-diacyl-sn-glycero-3-phosphate + CoA. The enzyme catalyses (4Z,7Z,10Z,13Z,16Z,19Z)-docosahexaenoyl-CoA + 1-hexadecanoyl-sn-glycero-3-phosphate = 1-hexadecanoyl-2-(4Z,7Z,10Z,13Z,16Z,19Z-docosahexaenoyl)-sn-glycero-3-phosphate + CoA. It catalyses the reaction 1-octadecanoyl-sn-glycero-3-phosphate + (9Z,12Z)-octadecadienoyl-CoA = 1-octadecanoyl-2-(9Z,12Z-octadecadienoyl)-sn-glycero-3-phosphate + CoA. It carries out the reaction 1-octadecanoyl-sn-glycero-3-phosphate + (4Z,7Z,10Z,13Z,16Z,19Z)-docosahexaenoyl-CoA = 1-octadecanoyl-2-(4Z,7Z,10Z,13Z,16Z,19Z-docosahexaenoyl)-sn-glycero-3-phosphate + CoA. The catalysed reaction is (4Z,7Z,10Z,13Z,16Z,19Z)-docosahexaenoyl-CoA + 1-(9Z-octadecenoyl)-sn-glycero-3-phosphate = 1-(9Z-octadecenoyl)-2-(4Z,7Z,10Z,13Z,16Z,19Z-docosahexaenoyl)-sn-glycero-3-phosphate + CoA. The protein operates within phospholipid metabolism; CDP-diacylglycerol biosynthesis; CDP-diacylglycerol from sn-glycerol 3-phosphate: step 2/3. Its function is as follows. Converts 1-acyl-sn-glycerol-3-phosphate (lysophosphatidic acid or LPA) into 1,2-diacyl-sn-glycerol-3-phosphate (phosphatidic acid or PA) by incorporating an acyl moiety at the sn-2 position of the glycerol backbone. Exhibits high acyl-CoA specificity for polyunsaturated fatty acyl-CoA, especially docosahexaenoyl-CoA (22:6-CoA, DHA-CoA). The sequence is that of 1-acyl-sn-glycerol-3-phosphate acyltransferase delta (Agpat4) from Mus musculus (Mouse).